Reading from the N-terminus, the 90-residue chain is Small ribosomal subunit protein uS15c (90 aa).

The protein belongs to the universal ribosomal protein uS15 family. As to quaternary structure, part of the 30S ribosomal subunit.

Its subcellular location is the plastid. It is found in the chloroplast. This chain is Small ribosomal subunit protein uS15c (rps15), found in Liriodendron tulipifera (Tuliptree).